The chain runs to 181 residues: UPF0316 protein Bcer98_2136 (181 aa).

3 consecutive transmembrane segments (helical) span residues 6-26 (LIFV…ILLV), 32-52 (SAAG…GIVF), and 58-78 (WMNI…GGYI).

This sequence belongs to the UPF0316 family.

The protein localises to the cell membrane. The polypeptide is UPF0316 protein Bcer98_2136 (Bacillus cytotoxicus (strain DSM 22905 / CIP 110041 / 391-98 / NVH 391-98)).